Here is a 393-residue protein sequence, read N- to C-terminus: Putative F-box/kelch-repeat protein At1g32430 (393 aa).

In terms of domain architecture, F-box spans 1-47 (MANKEKLPWDLEEEILSRVPPTSLDRFKTVCKRWNALFNDKTFINNH). 2 Kelch repeats span residues 151-199 (YMKD…NLSV) and 308-357 (WIYV…QVQF).

This Arabidopsis thaliana (Mouse-ear cress) protein is Putative F-box/kelch-repeat protein At1g32430.